The chain runs to 317 residues: Signal recognition particle receptor FtsY (317 aa).

GTP is bound by residues 117 to 124 (GVNGVGKT), 199 to 203 (DTAGR), and 263 to 266 (TKLD).

This sequence belongs to the GTP-binding SRP family. FtsY subfamily. In terms of assembly, part of the signal recognition particle protein translocation system, which is composed of SRP and FtsY.

It is found in the cell membrane. The protein resides in the cytoplasm. The catalysed reaction is GTP + H2O = GDP + phosphate + H(+). Its function is as follows. Involved in targeting and insertion of nascent membrane proteins into the cytoplasmic membrane. Acts as a receptor for the complex formed by the signal recognition particle (SRP) and the ribosome-nascent chain (RNC). This chain is Signal recognition particle receptor FtsY, found in Deinococcus radiodurans (strain ATCC 13939 / DSM 20539 / JCM 16871 / CCUG 27074 / LMG 4051 / NBRC 15346 / NCIMB 9279 / VKM B-1422 / R1).